Here is a 55-residue protein sequence, read N- to C-terminus: Large ribosomal subunit protein bL33 (55 aa).

It belongs to the bacterial ribosomal protein bL33 family.

The sequence is that of Large ribosomal subunit protein bL33 from Rhodopseudomonas palustris (strain HaA2).